The chain runs to 138 residues: Calmodulin-beta (138 aa).

4 EF-hand domains span residues 1–32 (EFKE…LGQN), 33–68 (PTEA…KMKE), 70–105 (DSEE…LGEK), and 106–138 (LTDE…MTSK). Residues Asp-10, Asp-12, Asp-14, Thr-16, Glu-21, Asp-46, Asp-48, Asn-50, Thr-52, Glu-57, Asp-83, Asp-85, Asn-87, Glu-94, Asp-119, Asp-121, Asp-123, Gln-125, and Glu-130 each coordinate Ca(2+).

It belongs to the calmodulin family.

Calmodulin mediates the control of a large number of enzymes, ion channels and other proteins by Ca(2+). Among the enzymes to be stimulated by the calmodulin-Ca(2+) complex are a number of protein kinases and phosphatases. The polypeptide is Calmodulin-beta (Arbacia punctulata (Punctuate sea urchin)).